Consider the following 186-residue polypeptide: ATP synthase subunit b, chloroplastic (186 aa).

The chain crosses the membrane as a helical span at residues 27–49 (LATNPINLSVVLGVLIFFGKGVL).

Belongs to the ATPase B chain family. F-type ATPases have 2 components, F(1) - the catalytic core - and F(0) - the membrane proton channel. F(1) has five subunits: alpha(3), beta(3), gamma(1), delta(1), epsilon(1). F(0) has four main subunits: a(1), b(1), b'(1) and c(10-14). The alpha and beta chains form an alternating ring which encloses part of the gamma chain. F(1) is attached to F(0) by a central stalk formed by the gamma and epsilon chains, while a peripheral stalk is formed by the delta, b and b' chains.

It localises to the plastid. Its subcellular location is the chloroplast thylakoid membrane. In terms of biological role, f(1)F(0) ATP synthase produces ATP from ADP in the presence of a proton or sodium gradient. F-type ATPases consist of two structural domains, F(1) containing the extramembraneous catalytic core and F(0) containing the membrane proton channel, linked together by a central stalk and a peripheral stalk. During catalysis, ATP synthesis in the catalytic domain of F(1) is coupled via a rotary mechanism of the central stalk subunits to proton translocation. Its function is as follows. Component of the F(0) channel, it forms part of the peripheral stalk, linking F(1) to F(0). The chain is ATP synthase subunit b, chloroplastic from Illicium oligandrum (Star anise).